A 444-amino-acid chain; its full sequence is Biotin carboxylase 2 (444 aa).

The Biotin carboxylation domain maps to 1–444 (MFTKVLIANR…VTTDFLKQHL (444 aa)). ATP is bound by residues lysine 116, lysine 158, 164–165 (GG), 200–203 (EKVI), histidine 208, and histidine 235. The region spanning 120–317 (RKAMEAAGVP…LVEQQLRIAA (198 aa)) is the ATP-grasp domain. Lysine 237 contributes to the hydrogencarbonate binding site. Residues glutamate 275 and glutamate 288 each coordinate ATP. Positions 275, 288, and 290 each coordinate Mg(2+). 3 residues coordinate Mn(2+): glutamate 275, glutamate 288, and asparagine 290. 3 residues coordinate hydrogencarbonate: arginine 292, valine 295, and arginine 338. Arginine 292 is an active-site residue. Arginine 338 is a binding site for biotin.

As to quaternary structure, acetyl-CoA carboxylase is a heterohexamer of biotin carboxyl carrier protein, biotin carboxylase and the two subunits of carboxyl transferase in a 2:2 complex. The cofactor is Mg(2+). Mn(2+) is required as a cofactor.

The enzyme catalyses N(6)-biotinyl-L-lysyl-[protein] + hydrogencarbonate + ATP = N(6)-carboxybiotinyl-L-lysyl-[protein] + ADP + phosphate + H(+). The protein operates within lipid metabolism; malonyl-CoA biosynthesis; malonyl-CoA from acetyl-CoA: step 1/1. Its function is as follows. This protein is a component of the acetyl coenzyme A carboxylase complex; first, biotin carboxylase catalyzes the carboxylation of the carrier protein and then the transcarboxylase transfers the carboxyl group to form malonyl-CoA. This Bacillus subtilis (strain 168) protein is Biotin carboxylase 2 (accC2).